The following is a 306-amino-acid chain: Non-specific ribonucleoside hydrolase RihC (306 aa).

Residue H235 is part of the active site.

It belongs to the IUNH family. RihC subfamily.

Its function is as follows. Hydrolyzes both purine and pyrimidine ribonucleosides with a broad-substrate specificity. The chain is Non-specific ribonucleoside hydrolase RihC from Salmonella paratyphi C (strain RKS4594).